A 186-amino-acid chain; its full sequence is Testis-expressed protein 29 (186 aa).

At 1 to 56 the chain is on the extracellular side; sequence MKDTKEIKRSPPHLLKKFAVCDIPLYDICDYNVTRERCRSLDCCFYRGVCYEKAVP. Residues 57 to 77 form a helical membrane-spanning segment; the sequence is IYVQVFFTLIWFVAGAFIIAV. Residues 78–151 are Cytoplasmic-facing; that stretch reads IYRVIQGTKK…AGCCLWMKSK (74 aa). Disordered stretches follow at residues 104–138 and 151–186; these read SPTP…KTES and KPAK…QAAP. Pro residues predominate over residues 108–133; that stretch reads ELIPEPIPEPIPEPIPEPIREPPPPV.

The protein resides in the membrane. This is Testis-expressed protein 29 (Tex29) from Mus musculus (Mouse).